The following is a 74-amino-acid chain: Large ribosomal subunit protein uL29 (74 aa).

This sequence belongs to the universal ribosomal protein uL29 family.

The chain is Large ribosomal subunit protein uL29 (rpmC) from Streptomyces coelicolor (strain ATCC BAA-471 / A3(2) / M145).